The sequence spans 186 residues: MREAIKRYGSFELLKGKNTLPELEALLEERKLVLENLKKQLKEAHKGKPKIEAEGDEKLKELIREVNKAQAEVRALEIIVNRVRKYEELYAQYKQMTEKKAYVDPKLWVRIRKMNETGERKVVRTYSRATTIIPEFVGHTIAVHNGKTFVPVYITQDMVGHKLGEFAPTRTFKGHPEKTAKVVKKK.

The segment at 1 to 95 (MREAIKRYGS…YEELYAQYKQ (95 aa)) is unknown. The interval 96–186 (MTEKKAYVDP…EKTAKVVKKK (91 aa)) is small ribosomal subunit protein uS19.

The protein belongs to the universal ribosomal protein uS19 family.

Functionally, protein S19 forms a complex with S13 that binds strongly to the 16S ribosomal RNA. The polypeptide is Small ribosomal subunit protein uS19 (Aquifex aeolicus (strain VF5)).